A 176-amino-acid chain; its full sequence is MDLPGPIHDILLVFLGLGLILGGLGVVLLTNPIYSAFSLGLVLVCISLFHIPSNSYFVAAAQLLIYVGAVNVLIVFAVMFMNGSEYSNDFHLWTVGDGVTSLVCTSILFSLITTIWNTSWYGIIWTTRSNQIIEQDLTSNVQQIGIRLATDFYLPFELISIILLAALIGAIAMARQ.

5 helical membrane passes run 10-30 (ILLVFLGLGLILGGLGVVLLT), 32-52 (PIYSAFSLGLVLVCISLFHIP), 61-81 (AQLLIYVGAVNVLIVFAVMFM), 107-127 (ILFSLITTIWNTSWYGIIWTT), and 152-172 (FYLPFELISIILLAALIGAIA).

The protein belongs to the complex I subunit 6 family. NDH is composed of at least 16 different subunits, 5 of which are encoded in the nucleus.

It localises to the plastid. Its subcellular location is the chloroplast thylakoid membrane. The catalysed reaction is a plastoquinone + NADH + (n+1) H(+)(in) = a plastoquinol + NAD(+) + n H(+)(out). It carries out the reaction a plastoquinone + NADPH + (n+1) H(+)(in) = a plastoquinol + NADP(+) + n H(+)(out). In terms of biological role, NDH shuttles electrons from NAD(P)H:plastoquinone, via FMN and iron-sulfur (Fe-S) centers, to quinones in the photosynthetic chain and possibly in a chloroplast respiratory chain. The immediate electron acceptor for the enzyme in this species is believed to be plastoquinone. Couples the redox reaction to proton translocation, and thus conserves the redox energy in a proton gradient. This Calycanthus floridus var. glaucus (Eastern sweetshrub) protein is NAD(P)H-quinone oxidoreductase subunit 6, chloroplastic (ndhG).